Here is a 101-residue protein sequence, read N- to C-terminus: Small ribosomal subunit protein uS14 (101 aa).

Basic and acidic residues predominate over residues 1–10 (MAKKSAIEKN). The disordered stretch occupies residues 1–23 (MAKKSAIEKNNRRKKMTKNAAPK). Positions 11 to 23 (NRRKKMTKNAAPK) are enriched in basic residues.

This sequence belongs to the universal ribosomal protein uS14 family. Part of the 30S ribosomal subunit. Contacts proteins S3 and S10.

Its function is as follows. Binds 16S rRNA, required for the assembly of 30S particles and may also be responsible for determining the conformation of the 16S rRNA at the A site. This Rhodopseudomonas palustris (strain TIE-1) protein is Small ribosomal subunit protein uS14.